Consider the following 408-residue polypeptide: Epsin-3 (408 aa).

Residue serine 2 is modified to N-acetylserine. Residues 24–157 (NVVFNYTEME…SDDNKIRAER (134 aa)) enclose the ENTH domain. Positions 162-182 (ETAKKYKGVAGGSASADGSLN) are disordered. Residues serine 196, serine 198, serine 203, serine 212, and serine 223 each carry the phosphoserine modification. Disordered stretches follow at residues 199–322 (ADFD…ITPA) and 338–408 (TAKA…LLSF). A compositionally biased stretch (acidic residues) spans 201–210 (FDSDNEDNED). Residues 211–231 (GSFSQNGYNDNASRATSTPGQ) are compositionally biased toward polar residues. Positions 249–263 (KPSKELIQEDEKKAD) are enriched in basic and acidic residues. Residues 264–273 (EEEDDDDEFS) show a composition bias toward acidic residues. Over residues 279–317 (VPVTNPANSFNLLNTSPIEGMPATTSSMPFYNSSTTDQG) the composition is skewed to polar residues. Residues 338 to 361 (TAKASAEAPSAPKASQAKAAASNP) show a composition bias toward low complexity. Composition is skewed to polar residues over residues 362–371 (VSNSTTALST) and 388–398 (QQEQNTNNNHT). Basic and acidic residues predominate over residues 399–408 (SSKEIDLLSF).

Interacts with the clathrin adapter GGA2, and VPS27.

The protein resides in the cytoplasm. It is found in the golgi apparatus. It localises to the trans-Golgi network membrane. The protein localises to the cytoplasmic vesicle. Its subcellular location is the clathrin-coated vesicle membrane. Its function is as follows. Involved in the recruitment of clathrin to the Golgi network and endosomes to form clathrin coated vesicles. Plays a role in the trafficking of clathrin between the Golgi network and endosomes. Binds to membranes enriched in phosphatidylinositol-3,5-bisphosphate (PtdIns(3,5)P2) and, in association with VPS27, is involved in protein sorting at the multivesicular body (MVB). This Saccharomyces cerevisiae (strain ATCC 204508 / S288c) (Baker's yeast) protein is Epsin-3 (ENT3).